A 396-amino-acid chain; its full sequence is Stearoyl-[acyl-carrier-protein] 9-desaturase 5, chloroplastic (396 aa).

The transit peptide at 1–29 (MAMAMDRIVFSPSSYVYRPCQARGSRSSR) directs the protein to the chloroplast. Fe cation contacts are provided by glutamate 137, glutamate 175, histidine 178, glutamate 228, glutamate 261, and histidine 264.

The protein belongs to the fatty acid desaturase type 2 family. In terms of assembly, homodimer. It depends on Fe(2+) as a cofactor. In terms of tissue distribution, ubiquitously expressed with a preference in leaves, flowers and stems.

It is found in the plastid. The protein localises to the chloroplast stroma. The catalysed reaction is octadecanoyl-[ACP] + 2 reduced [2Fe-2S]-[ferredoxin] + O2 + 2 H(+) = (9Z)-octadecenoyl-[ACP] + 2 oxidized [2Fe-2S]-[ferredoxin] + 2 H2O. It functions in the pathway lipid metabolism; fatty acid metabolism. Functionally, converts stearoyl-ACP to oleoyl-ACP by introduction of a cis double bond between carbons 9 and 10 of the acyl chain. The protein is Stearoyl-[acyl-carrier-protein] 9-desaturase 5, chloroplastic (S-ACP-DES5) of Arabidopsis thaliana (Mouse-ear cress).